A 380-amino-acid chain; its full sequence is Erythronate-4-phosphate dehydrogenase (380 aa).

Residues Ser45 and Thr66 each contribute to the substrate site. NAD(+)-binding positions include Asp146, Thr174, 205 to 207, and Asp231; that span reads ASR. Arg207 is a catalytic residue. Glu236 is an active-site residue. His253 acts as the Proton donor in catalysis. Residue Gly256 coordinates NAD(+). A substrate-binding site is contributed by Tyr257.

This sequence belongs to the D-isomer specific 2-hydroxyacid dehydrogenase family. PdxB subfamily. Homodimer.

The protein localises to the cytoplasm. The catalysed reaction is 4-phospho-D-erythronate + NAD(+) = (R)-3-hydroxy-2-oxo-4-phosphooxybutanoate + NADH + H(+). The protein operates within cofactor biosynthesis; pyridoxine 5'-phosphate biosynthesis; pyridoxine 5'-phosphate from D-erythrose 4-phosphate: step 2/5. Its function is as follows. Catalyzes the oxidation of erythronate-4-phosphate to 3-hydroxy-2-oxo-4-phosphonooxybutanoate. This chain is Erythronate-4-phosphate dehydrogenase, found in Pseudomonas putida (strain GB-1).